The chain runs to 1155 residues: Agglutinin-like protein 3 (1155 aa).

Positions 1–17 are cleaved as a signal peptide; sequence MLQQYTLLLIYLSVATA. Disulfide bonds link C73–C150, C96–C112, C205–C298, and C227–C256. ALS repeat units lie at residues 365 to 396, 401 to 432, and 438 to 469; these read TTITTSYVGVTTSYSTKTAPIGETATVIVDIP, TTVTSKWTGTITSTTTHTNPTDSIDTVIVQVP, and VTTTEYWSQSFATTTTITGPPGNTDTVLIREP. A glycan (N-linked (GlcNAc...) asparagine) is linked at N471. ALS repeat units follow at residues 474-505 and 510-541; these read VTTTEYWSESYTTTSTFTAPPGGTDSVIIKEP and VTTTEYWSESYTTTTTVTAPPGGTDTVIIREP. A glycan (N-linked (GlcNAc...) asparagine) is linked at N543. ALS repeat units lie at residues 546-577 and 582-613; these read VTTTEYWSQSYTTTTTVIAPPGGTDSVIIREP and VTTTEYWSQSYATTTTITAPPGETDTVLIREP. N-linked (GlcNAc...) asparagine glycosylation occurs at N615. One copy of the ALS 8 repeat lies at 618–649; the sequence is VTTTEYWSQSYATTTTITAPPGETDTVLIREP. An N-linked (GlcNAc...) asparagine glycan is attached at N651. 2 ALS repeats span residues 654–685 and 690–721; these read VTTTEYWSQSYTTTTTVIAPPGGTDSVIIKEP and VTTTEYWSQSYATTTTITAPPGETDTVLIREP. Residue N723 is glycosylated (N-linked (GlcNAc...) asparagine). An ALS 11 repeat occupies 726–757; sequence VTTTEYWSQSYATTTTITAPPGETDTVLIREP. Residue N759 is glycosylated (N-linked (GlcNAc...) asparagine). One copy of the ALS 12 repeat lies at 762–793; the sequence is VTTTEYWSQSFATTTTVTAPPGGTDTVIIREP. N-linked (GlcNAc...) asparagine glycosylation occurs at N795. ALS repeat units follow at residues 798–829 and 834–863; these read VTTTEYWSQSFATTTTIIAPPGETDTVLIREP and VTTTEYWSQSYTTATTVTAPPGGTDTVIIY. The N-linked (GlcNAc...) asparagine glycan is linked to N881. The disordered stretch occupies residues 936 to 1115; that stretch reads TTTESTLQSP…NSDTQQTTLS (180 aa). The span at 949–965 shows a compositional bias: low complexity; sequence FSESGVSVETESSTFTT. Residues 966–977 show a composition bias toward polar residues; the sequence is AQTNPSVPTTES. The segment covering 1010–1019 has biased composition (low complexity); the sequence is TTSTAASTST. N1023 is a glycosylation site (N-linked (GlcNAc...) asparagine). Composition is skewed to low complexity over residues 1034-1058 and 1071-1115; these read ASSPIISSSADETTTVTTTAESTSV and APSA…TTLS. N1099 carries N-linked (GlcNAc...) asparagine glycosylation. S1134 carries GPI-anchor amidated serine lipidation. The propeptide at 1135 to 1155 is removed in mature form; it reads GSVIQHSTWLCGLITLLSLFI.

Belongs to the ALS family. The GPI-anchor is attached to the protein in the endoplasmic reticulum and serves to target the protein to the cell surface. There, the glucosamine-inositol phospholipid moiety is cleaved off and the GPI-modified mannoprotein is covalently attached via its lipidless GPI glycan remnant to the 1,6-beta-glucan of the outer cell wall layer.

Its subcellular location is the cell membrane. The protein resides in the secreted. It is found in the cell wall. In terms of biological role, cell surface adhesion protein which mediates both yeast-to-host tissue adherence and yeast aggregation. Plays an important role in the biofilm formation and pathogenesis of C.albicans infections. Necessary for C.albicans to bind to N-cadherin on endothelial cells and E-cadherin on oral epithelial cells and subsequent endocytosis by these cells. During disseminated infection, mediates initial trafficking to the brain and renal cortex and contributes to fungal persistence in the kidneys. In Candida albicans (strain SC5314 / ATCC MYA-2876) (Yeast), this protein is Agglutinin-like protein 3 (ALS3).